The following is a 61-amino-acid chain: Large ribosomal subunit protein uL30 (61 aa).

This sequence belongs to the universal ribosomal protein uL30 family. In terms of assembly, part of the 50S ribosomal subunit.

The protein is Large ribosomal subunit protein uL30 of Jannaschia sp. (strain CCS1).